Reading from the N-terminus, the 155-residue chain is Small ribosomal subunit protein uS7cz/uS7cy (155 aa).

Belongs to the universal ribosomal protein uS7 family. Part of the 30S ribosomal subunit.

The protein resides in the plastid. Its subcellular location is the chloroplast. Functionally, one of the primary rRNA binding proteins, it binds directly to 16S rRNA where it nucleates assembly of the head domain of the 30S subunit. In Morus indica (Mulberry), this protein is Small ribosomal subunit protein uS7cz/uS7cy (rps7-A).